The chain runs to 44 residues: DNA-directed RNA polymerase subunit Rpo12 (44 aa).

Residues Cys-8, Cys-22, and Cys-25 each coordinate Zn(2+).

The protein belongs to the archaeal Rpo12/eukaryotic RPC10 RNA polymerase subunit family. In terms of assembly, part of the RNA polymerase complex. It depends on Zn(2+) as a cofactor.

The protein localises to the cytoplasm. It carries out the reaction RNA(n) + a ribonucleoside 5'-triphosphate = RNA(n+1) + diphosphate. In terms of biological role, DNA-dependent RNA polymerase (RNAP) catalyzes the transcription of DNA into RNA using the four ribonucleoside triphosphates as substrates. The polypeptide is DNA-directed RNA polymerase subunit Rpo12 (Natronomonas pharaonis (strain ATCC 35678 / DSM 2160 / CIP 103997 / JCM 8858 / NBRC 14720 / NCIMB 2260 / Gabara) (Halobacterium pharaonis)).